The sequence spans 114 residues: Large ribosomal subunit protein uL22 (114 aa).

This sequence belongs to the universal ribosomal protein uL22 family. In terms of assembly, part of the 50S ribosomal subunit.

In terms of biological role, this protein binds specifically to 23S rRNA; its binding is stimulated by other ribosomal proteins, e.g. L4, L17, and L20. It is important during the early stages of 50S assembly. It makes multiple contacts with different domains of the 23S rRNA in the assembled 50S subunit and ribosome. Functionally, the globular domain of the protein is located near the polypeptide exit tunnel on the outside of the subunit, while an extended beta-hairpin is found that lines the wall of the exit tunnel in the center of the 70S ribosome. The sequence is that of Large ribosomal subunit protein uL22 from Ehrlichia chaffeensis (strain ATCC CRL-10679 / Arkansas).